The chain runs to 194 residues: PLLAARRLLGAELIGRGVTAAIVEVEAYGGPADGPWPDAASHSFRGAGGRNLVMFGPPGHLYTYRSHGIHVCANVVCGFDGVAGAVLLRAAVVRTGADVAGRRRGPAILPAALARGPGNLCSALGITMEDNGIDLFDADSPVRLTLGEPVPSVDGPRVGVSKAADRRWRLWLADSSEVSAYRRSPRAPAPGASD.

This sequence belongs to the DNA glycosylase MPG family.

The chain is Putative 3-methyladenine DNA glycosylase from Mycolicibacterium fortuitum (Mycobacterium fortuitum).